A 338-amino-acid chain; its full sequence is tRNA N6-adenosine threonylcarbamoyltransferase (338 aa).

Fe cation contacts are provided by His-114 and His-118. Substrate contacts are provided by residues 136–140, Asp-169, Gly-182, Asp-186, and Asn-275; that span reads LVSGG. Residue Asp-301 participates in Fe cation binding.

The protein belongs to the KAE1 / TsaD family. The cofactor is Fe(2+).

The protein resides in the cytoplasm. The catalysed reaction is L-threonylcarbamoyladenylate + adenosine(37) in tRNA = N(6)-L-threonylcarbamoyladenosine(37) in tRNA + AMP + H(+). Required for the formation of a threonylcarbamoyl group on adenosine at position 37 (t(6)A37) in tRNAs that read codons beginning with adenine. Is involved in the transfer of the threonylcarbamoyl moiety of threonylcarbamoyl-AMP (TC-AMP) to the N6 group of A37, together with TsaE and TsaB. TsaD likely plays a direct catalytic role in this reaction. This chain is tRNA N6-adenosine threonylcarbamoyltransferase, found in Streptococcus equi subsp. zooepidemicus (strain MGCS10565).